The chain runs to 141 residues: Nucleoside diphosphate kinase (141 aa).

ATP is bound by residues lysine 11, phenylalanine 59, arginine 87, threonine 93, arginine 104, and asparagine 114. Residue histidine 117 is the Pros-phosphohistidine intermediate of the active site.

Belongs to the NDK family. In terms of assembly, homotetramer. Mg(2+) is required as a cofactor.

It localises to the cytoplasm. The enzyme catalyses a 2'-deoxyribonucleoside 5'-diphosphate + ATP = a 2'-deoxyribonucleoside 5'-triphosphate + ADP. It catalyses the reaction a ribonucleoside 5'-diphosphate + ATP = a ribonucleoside 5'-triphosphate + ADP. Functionally, major role in the synthesis of nucleoside triphosphates other than ATP. The ATP gamma phosphate is transferred to the NDP beta phosphate via a ping-pong mechanism, using a phosphorylated active-site intermediate. In Xanthomonas axonopodis pv. citri (strain 306), this protein is Nucleoside diphosphate kinase.